We begin with the raw amino-acid sequence, 146 residues long: Hemoglobin subunit beta-2 (146 aa).

The Globin domain maps to 2–146 (HWTAEEKQLV…VAHALAYHYH (145 aa)). The heme b site is built by H63 and H92.

Belongs to the globin family. As to quaternary structure, there are three forms of hemoglobin in Sphenodon: A, A' and D. Hb A is a tetramer of two alpha-A and two beta-1, Hb A' is a tetramer of two alpha-a and two beta-2, Hb D is a tetramer of two alpha-D and two beta-2.

Its function is as follows. Involved in oxygen transport from the lung to the various peripheral tissues. In Sphenodon punctatus (Tuatara), this protein is Hemoglobin subunit beta-2 (HBB2).